The primary structure comprises 476 residues: Aspartyl/glutamyl-tRNA(Asn/Gln) amidotransferase subunit B (476 aa).

This sequence belongs to the GatB/GatE family. GatB subfamily. In terms of assembly, heterotrimer of A, B and C subunits.

It carries out the reaction L-glutamyl-tRNA(Gln) + L-glutamine + ATP + H2O = L-glutaminyl-tRNA(Gln) + L-glutamate + ADP + phosphate + H(+). The enzyme catalyses L-aspartyl-tRNA(Asn) + L-glutamine + ATP + H2O = L-asparaginyl-tRNA(Asn) + L-glutamate + ADP + phosphate + 2 H(+). Functionally, allows the formation of correctly charged Asn-tRNA(Asn) or Gln-tRNA(Gln) through the transamidation of misacylated Asp-tRNA(Asn) or Glu-tRNA(Gln) in organisms which lack either or both of asparaginyl-tRNA or glutaminyl-tRNA synthetases. The reaction takes place in the presence of glutamine and ATP through an activated phospho-Asp-tRNA(Asn) or phospho-Glu-tRNA(Gln). The protein is Aspartyl/glutamyl-tRNA(Asn/Gln) amidotransferase subunit B of Lactobacillus delbrueckii subsp. bulgaricus (strain ATCC 11842 / DSM 20081 / BCRC 10696 / JCM 1002 / NBRC 13953 / NCIMB 11778 / NCTC 12712 / WDCM 00102 / Lb 14).